A 658-amino-acid chain; its full sequence is Glycogen debranching enzyme (658 aa).

The active-site Nucleophile is D336. Catalysis depends on E371, which acts as the Proton donor. The tract at residues 459 to 483 (EANGEENRDGTNSNYSDNHGKEGLG) is disordered.

The protein belongs to the glycosyl hydrolase 13 family.

It carries out the reaction Hydrolysis of (1-&gt;6)-alpha-D-glucosidic linkages to branches with degrees of polymerization of three or four glucose residues in limit dextrin.. Its pathway is glycan degradation; glycogen degradation. Removes maltotriose and maltotetraose chains that are attached by 1,6-alpha-linkage to the limit dextrin main chain, generating a debranched limit dextrin. The chain is Glycogen debranching enzyme from Salmonella agona (strain SL483).